The primary structure comprises 441 residues: Probable xylan O-acetyltransferase 10 (441 aa).

The Cytoplasmic portion of the chain corresponds to 1–19; sequence MMKPQHGGMAGHGGGRTRS. A helical; Signal-anchor for type II membrane protein membrane pass occupies residues 20-40; sequence PFLTSYALTLAFITFVSVLYF. At 41–441 the chain is on the lumenal side; sequence KDFSSTLHQP…ELLYSKLFFP (401 aa). Residues 50–81 are disordered; sequence PFLTRPPPHRRQIARPRAPSHHHGGGSSSGGG. Residues 56-73 are compositionally biased toward basic residues; the sequence is PPHRRQIARPRAPSHHHG. 4 cysteine pairs are disulfide-bonded: C97–C148, C119–C184, C128–C422, and C341–C418. Residue N154 is glycosylated (N-linked (GlcNAc...) asparagine). The GDS motif motif lies at 171 to 173; it reads GDS. S173 serves as the catalytic Nucleophile. N-linked (GlcNAc...) asparagine glycans are attached at residues N212, N343, and N381. D417 serves as the catalytic Proton donor. The short motif at 417 to 420 is the DXXH motif element; it reads DCTH. The active-site Proton acceptor is H420.

The protein belongs to the PC-esterase family. TBL subfamily. In terms of tissue distribution, expressed in roots, leaves and stems.

Its subcellular location is the golgi apparatus membrane. In terms of biological role, probable xylan acetyltransferase required for 2-O- and 3-O-monoacetylation of xylosyl residues in xylan. Possesses extremely low activity in vitro. This is Probable xylan O-acetyltransferase 10 from Oryza sativa subsp. japonica (Rice).